We begin with the raw amino-acid sequence, 339 residues long: MFESVYNLPEQIQKAYEIGKNISVNVKAEDIDKVVITGLGGSAIGGNLLRVFVLDKCKIPVIVNRDYVLPAYVDSKTLVIASSYSGNTEETLSAYQDAKAKGAKIIAITTGGKLKEFAEKDGFDVITIPSGLQPRAALGYSFIPLLMLFVKLGLIEPVDDQIEETVKVLSDLRERYKPEVPEEKNLAKRLTLKLWNKLPIIYGISGTTEVIAERWKGQICENSKSPAYFNVFSELNHNEIVGTESPKHILGLFEIVMLHDTEDHKRNAIRMDITKDLIKGVVSGVNDIYSIGNSRLARMFSLIYLGDYVSLYLATLYQNDPTPVKKIDILKNKLAEIKD.

In terms of domain architecture, SIS spans 22-164; that stretch reads ISVNVKAEDI…IEPVDDQIEE (143 aa). Positions 41, 42, 83, 85, 88, and 135 each coordinate D-fructose 6-phosphate. The active-site Proton acceptor is the Glu-221. Residues His-237 and Lys-331 each coordinate D-fructose 6-phosphate. The active-site Proton donor is His-237. Lys-331 serves as the catalytic Proton acceptor.

Belongs to the PGI/PMI family. As to quaternary structure, homodimer.

The catalysed reaction is alpha-D-glucose 6-phosphate = beta-D-fructose 6-phosphate. The enzyme catalyses D-mannose 6-phosphate = D-fructose 6-phosphate. Its function is as follows. Dual specificity isomerase that catalyzes the isomerization of both glucose-6-phosphate and mannose-6-phosphate to fructose-6-phosphate. This Caldicellulosiruptor bescii (strain ATCC BAA-1888 / DSM 6725 / KCTC 15123 / Z-1320) (Anaerocellum thermophilum) protein is Bifunctional phosphoglucose/phosphomannose isomerase.